The chain runs to 327 residues: Glycerol-3-phosphate dehydrogenase [NAD(P)+] (327 aa).

Positions 11, 30, and 103 each coordinate NADPH. Residues Lys103, Gly131, and Ser133 each contribute to the sn-glycerol 3-phosphate site. Ala135 is an NADPH binding site. 5 residues coordinate sn-glycerol 3-phosphate: Lys186, Asp243, Ser253, Arg254, and Asn255. The Proton acceptor role is filled by Lys186. Position 254 (Arg254) interacts with NADPH. The NADPH site is built by Val281 and Glu283.

Belongs to the NAD-dependent glycerol-3-phosphate dehydrogenase family.

The protein resides in the cytoplasm. The enzyme catalyses sn-glycerol 3-phosphate + NAD(+) = dihydroxyacetone phosphate + NADH + H(+). It catalyses the reaction sn-glycerol 3-phosphate + NADP(+) = dihydroxyacetone phosphate + NADPH + H(+). It functions in the pathway membrane lipid metabolism; glycerophospholipid metabolism. In terms of biological role, catalyzes the reduction of the glycolytic intermediate dihydroxyacetone phosphate (DHAP) to sn-glycerol 3-phosphate (G3P), the key precursor for phospholipid synthesis. The sequence is that of Glycerol-3-phosphate dehydrogenase [NAD(P)+] from Wolbachia sp. subsp. Brugia malayi (strain TRS).